A 193-amino-acid chain; its full sequence is Pyridoxal 5'-phosphate synthase subunit PdxT (193 aa).

Residue 48–50 (GES) coordinates L-glutamine. Cys-80 (nucleophile) is an active-site residue. L-glutamine-binding positions include Arg-107 and 136 to 137 (IR). Catalysis depends on charge relay system residues His-172 and Glu-174.

The protein belongs to the glutaminase PdxT/SNO family. As to quaternary structure, in the presence of PdxS, forms a dodecamer of heterodimers. Only shows activity in the heterodimer.

The catalysed reaction is aldehydo-D-ribose 5-phosphate + D-glyceraldehyde 3-phosphate + L-glutamine = pyridoxal 5'-phosphate + L-glutamate + phosphate + 3 H2O + H(+). The enzyme catalyses L-glutamine + H2O = L-glutamate + NH4(+). It functions in the pathway cofactor biosynthesis; pyridoxal 5'-phosphate biosynthesis. Catalyzes the hydrolysis of glutamine to glutamate and ammonia as part of the biosynthesis of pyridoxal 5'-phosphate. The resulting ammonia molecule is channeled to the active site of PdxS. The polypeptide is Pyridoxal 5'-phosphate synthase subunit PdxT (Clostridium botulinum (strain Loch Maree / Type A3)).